The sequence spans 579 residues: Laccase-4 (579 aa).

The signal sequence occupies residues 1-28 (MTMAISSALPSPLLLAASLLLLIVQAQG). Plastocyanin-like domains lie at 36–152 (NVQM…PKLG) and 162–316 (KEVP…YENP). N-linked (GlcNAc...) asparagine glycosylation is found at Asn-41 and Asn-82. Residues His-86 and His-88 each contribute to the Cu cation site. The N-linked (GlcNAc...) asparagine glycan is linked to Asn-118. Cu cation is bound by residues His-131 and His-133. 12 N-linked (GlcNAc...) asparagine glycosylation sites follow: Asn-191, Asn-207, Asn-243, Asn-304, Asn-340, Asn-347, Asn-386, Asn-393, Asn-403, Asn-439, Asn-446, and Asn-462. The Plastocyanin-like 3 domain occupies 429 to 563 (DFPVAPLSPF…RMAWLVLDGS (135 aa)). His-480, His-483, His-485, His-542, Cys-543, His-544, and His-548 together coordinate Cu cation.

This sequence belongs to the multicopper oxidase family. Cu cation is required as a cofactor.

The protein localises to the secreted. Its subcellular location is the extracellular space. It localises to the apoplast. It catalyses the reaction 4 hydroquinone + O2 = 4 benzosemiquinone + 2 H2O. Lignin degradation and detoxification of lignin-derived products. The polypeptide is Laccase-4 (LAC4) (Oryza sativa subsp. japonica (Rice)).